Reading from the N-terminus, the 318-residue chain is Malate dehydrogenase (318 aa).

NAD(+) contacts are provided by residues 10-15 (GGGQIG) and Asp34. Residues Arg83 and Arg89 each contribute to the substrate site. Residues Asn96 and 119–121 (ISN) contribute to the NAD(+) site. Substrate is bound by residues Asn121 and Arg152. Catalysis depends on His176, which acts as the Proton acceptor.

This sequence belongs to the LDH/MDH superfamily. MDH type 3 family.

The catalysed reaction is (S)-malate + NAD(+) = oxaloacetate + NADH + H(+). Its function is as follows. Catalyzes the reversible oxidation of malate to oxaloacetate. The polypeptide is Malate dehydrogenase (Geotalea daltonii (strain DSM 22248 / JCM 15807 / FRC-32) (Geobacter daltonii)).